A 402-amino-acid polypeptide reads, in one-letter code: NADH-quinone oxidoreductase subunit D (402 aa).

This sequence belongs to the complex I 49 kDa subunit family. NDH-1 is composed of 14 different subunits. Subunits NuoB, C, D, E, F, and G constitute the peripheral sector of the complex.

It is found in the cell inner membrane. The enzyme catalyses a quinone + NADH + 5 H(+)(in) = a quinol + NAD(+) + 4 H(+)(out). Its function is as follows. NDH-1 shuttles electrons from NADH, via FMN and iron-sulfur (Fe-S) centers, to quinones in the respiratory chain. The immediate electron acceptor for the enzyme in this species is believed to be ubiquinone. Couples the redox reaction to proton translocation (for every two electrons transferred, four hydrogen ions are translocated across the cytoplasmic membrane), and thus conserves the redox energy in a proton gradient. The sequence is that of NADH-quinone oxidoreductase subunit D from Maricaulis maris (strain MCS10) (Caulobacter maris).